The following is a 277-amino-acid chain: Carbonyl reductase [NADPH] 3 (277 aa).

N-acetylserine is present on Ser2. NADP(+) contacts are provided by residues 10-34, 38-42, 63-64, and Asn90; these read VTGA…GDVV, RDEAR, and DI. Residue Ser30 is modified to Phosphoserine. Ser140 provides a ligand contact to substrate. Tyr194 serves as the catalytic Proton acceptor. 194-198 is an NADP(+) binding site; that stretch reads YGVSK.

Belongs to the short-chain dehydrogenases/reductases (SDR) family.

The protein resides in the cytoplasm. It carries out the reaction a secondary alcohol + NADP(+) = a ketone + NADPH + H(+). The enzyme catalyses a quinone + NADPH + H(+) = a quinol + NADP(+). Its function is as follows. Catalyzes the NADPH-dependent reduction of carbonyl compounds to their corresponding alcohols. Has low NADPH-dependent oxidoreductase activity. Acts on several orthoquinones, as well as on non-quinone compounds, such as isatin or on the anticancer drug oracin. Best substrates for CBR3 is 1,2- naphthoquinone, hence could play a role in protection against cytotoxicity of exogenous quinones. Exerts activity toward ortho-quinones but not paraquinones. No endogenous substrate for CBR3 except isatin has been identified. This is Carbonyl reductase [NADPH] 3 from Rattus norvegicus (Rat).